A 473-amino-acid polypeptide reads, in one-letter code: MKTLYSLRRFYPVETLFNGTLALAGRDQETTGFAWWAGNARLINLSGKLLGAHVAHAGLIVFWAGAMNLFEVAHFVPEKPMYEQGLILLPHLATLGWGVGPGGEVIDTFPYFVSGVLHLISSAVLGFGGIYHALLGPETLEESFPFFGYVWKDRNKMTTILGIHLILLGIGAFLLVFKALYFGGVYDTWAPGGGDVRKITNLTLSPSVIFGYLLKSPFGGEGWIVSVDDLEDIIGGHVWLGSICIFGGIWHILTKPFAWARRALVWSGEAYLSYSLGALSVFGFIACCFVWFNNTAYPSEFYGPTGPEASQAQAFTFLVRDQRLGANVGSAQGPTGLGKYLMRSPTGEVIFGGETMRFWDLRAPWLEPLRGPNGLDLSRLKKDIQPWQERRSAEYMTHAPLGSLNSVGGVATEINAVNYVSPRSWLATSHFVLGFFLFVGHLWHAGRARAAAAGFEKGIDRDFEPVLSMTPLN.

Residues 1–14 (MKTLYSLRRFYPVE) constitute a propeptide that is removed on maturation. T15 carries the N-acetylthreonine modification. At T15 the chain carries Phosphothreonine. Helical transmembrane passes span 69 to 93 (LFEVAHFVPEKPMYEQGLILLPHLA), 134 to 155 (LLGPETLEESFPFFGYVWKDRN), 178 to 200 (KALYFGGVYDTWAPGGGDVRKIT), 255 to 275 (KPFAWARRALVWSGEAYLSYS), and 291 to 312 (WFNNTAYPSEFYGPTGPEASQA). E367 is a [CaMn4O5] cluster binding site. Residues 447-471 (RARAAAAGFEKGIDRDFEPVLSMTP) form a helical membrane-spanning segment.

Belongs to the PsbB/PsbC family. PsbC subfamily. PSII is composed of 1 copy each of membrane proteins PsbA, PsbB, PsbC, PsbD, PsbE, PsbF, PsbH, PsbI, PsbJ, PsbK, PsbL, PsbM, PsbT, PsbX, PsbY, PsbZ, Psb30/Ycf12, at least 3 peripheral proteins of the oxygen-evolving complex and a large number of cofactors. It forms dimeric complexes. Binds multiple chlorophylls and provides some of the ligands for the Ca-4Mn-5O cluster of the oxygen-evolving complex. It may also provide a ligand for a Cl- that is required for oxygen evolution. PSII binds additional chlorophylls, carotenoids and specific lipids. serves as cofactor.

The protein resides in the plastid. The protein localises to the chloroplast thylakoid membrane. In terms of biological role, one of the components of the core complex of photosystem II (PSII). It binds chlorophyll and helps catalyze the primary light-induced photochemical processes of PSII. PSII is a light-driven water:plastoquinone oxidoreductase, using light energy to abstract electrons from H(2)O, generating O(2) and a proton gradient subsequently used for ATP formation. The chain is Photosystem II CP43 reaction center protein from Gossypium hirsutum (Upland cotton).